Reading from the N-terminus, the 80-residue chain is Acyl carrier protein (80 aa).

Residues 4-79 (DEVKGQVYDI…DAINYIVEKK (76 aa)) enclose the Carrier domain. S39 bears the O-(pantetheine 4'-phosphoryl)serine mark.

It belongs to the acyl carrier protein (ACP) family. In terms of processing, 4'-phosphopantetheine is transferred from CoA to a specific serine of apo-ACP by AcpS. This modification is essential for activity because fatty acids are bound in thioester linkage to the sulfhydryl of the prosthetic group.

It is found in the cytoplasm. It functions in the pathway lipid metabolism; fatty acid biosynthesis. Functionally, carrier of the growing fatty acid chain in fatty acid biosynthesis. The chain is Acyl carrier protein from Chloroherpeton thalassium (strain ATCC 35110 / GB-78).